We begin with the raw amino-acid sequence, 84 residues long: Small ribosomal subunit protein bS18B (84 aa).

Basic residues predominate over residues 1-10 (MAVKRAPSKK). Residues 1–20 (MAVKRAPSKKVRAEQARRPK) form a disordered region.

It belongs to the bacterial ribosomal protein bS18 family. In terms of assembly, part of the 30S ribosomal subunit. Forms a tight heterodimer with protein bS6.

Functionally, binds as a heterodimer with protein bS6 to the central domain of the 16S rRNA, where it helps stabilize the platform of the 30S subunit. This chain is Small ribosomal subunit protein bS18B, found in Nocardia farcinica (strain IFM 10152).